Reading from the N-terminus, the 333-residue chain is D-2-hydroxyacid dehydrogenase (NAD+) (333 aa).

Residue Y100 participates in 4-methyl-2-oxopentanoate binding. Positions 155, 156, 175, 205, 211, 232, 234, and 258 each coordinate NAD(+). R234 is a catalytic residue. Residue E263 is part of the active site. H295 provides a ligand contact to 4-methyl-2-oxopentanoate. H295 (proton donor) is an active-site residue.

The protein belongs to the D-isomer specific 2-hydroxyacid dehydrogenase family. In terms of assembly, homodimer.

The catalysed reaction is a (2R)-2-hydroxycarboxylate + NAD(+) = a 2-oxocarboxylate + NADH + H(+). The enzyme catalyses (2R)-hydroxy-4-methylpentanoate + NAD(+) = 4-methyl-2-oxopentanoate + NADH + H(+). It carries out the reaction (R)-3-phenyllactate + NAD(+) = 3-phenylpyruvate + NADH + H(+). Completely inhibited In the presence of 0.1 mM Hg(2+). No influence on the activity could be detected with Mg(2+) and Ca(2+) and only very weak effects with Cd(2+), Co(2+) and Mn(2+). Reducing agents and thiol group reagents do not affect catalytic activity. Functionally, catalyzes the NADH-dependent reversible reduction of various 2-ketocarboxylic acids to the corresponding D-2-hydroxycarboxylic acids. In vitro can use various substrates, including 4-methyl-2-oxopentanoate (2-oxoisocaproate), 2-oxopentanoate, 2-oxohexanoate and phenylpyruvate. The polypeptide is D-2-hydroxyacid dehydrogenase (NAD+) (Lacticaseibacillus paracasei (Lactobacillus paracasei)).